Consider the following 261-residue polypeptide: Lys-63-specific deubiquitinase BRCC36 (261 aa).

Residues Val-6 to Gln-149 enclose the MPN domain. 3 residues coordinate Zn(2+): His-92, His-94, and Asp-105. The JAMM motif motif lies at His-92–Asp-105.

The protein belongs to the peptidase M67A family. BRCC36 subfamily. In terms of assembly, component of the BRCA1-A complex, at least composed of brca1, bard1, uimc1/rap80, abraxas1, brcc3/brcc36, babam2 and babam1/nba1. In the BRCA1-A complex, interacts directly with abraxas1 and babam2. Component of the BRISC complex, at least composed of abraxas2, brcc3/brcc36, babam2 and babam1/nba1. Within the complex, interacts directly with abraxas2. Both the BRCA1-A complex and the BRISC complex bind polyubiquitin. Requires Zn(2+) as cofactor.

It localises to the nucleus. The protein localises to the cytoplasm. It is found in the cytoskeleton. Its subcellular location is the spindle pole. Functionally, metalloprotease that specifically cleaves 'Lys-63'-linked polyubiquitin chains. Does not have activity toward 'Lys-48'-linked polyubiquitin chains. Component of the BRCA1-A complex, a complex that specifically recognizes 'Lys-63'-linked ubiquitinated histones H2A and H2AX at DNA lesions sites, leading to target the brca1-bard1 heterodimer to sites of DNA damage at double-strand breaks (DSBs). In the BRCA1-A complex, it specifically removes 'Lys-63'-linked ubiquitin on histones H2A and H2AX, antagonizing the rnf8-dependent ubiquitination at double-strand breaks (DSBs). Catalytic subunit of the BRISC complex, a multiprotein complex that specifically cleaves 'Lys-63'-linked ubiquitin in various substrates. Mediates the specific 'Lys-63'-specific deubiquitination associated with the COP9 signalosome complex (CSN), via the interaction of the BRISC complex with the CSN complex. The BRISC complex is required for normal mitotic spindle assembly and microtubule attachment to kinetochores via its role in deubiquitinating numa1. Plays a role in interferon signaling via its role in the deubiquitination of the interferon receptor ifnar1; deubiquitination increases ifnar1 activity by enhancing its stability and cell surface expression. Acts as a regulator of the NLRP3 inflammasome by mediating deubiquitination of nlrp3. Down-regulates the response to bacterial lipopolysaccharide (LPS) via its role in ifnar1 deubiquitination. This chain is Lys-63-specific deubiquitinase BRCC36 (brcc3), found in Xenopus tropicalis (Western clawed frog).